The chain runs to 1082 residues: Error-prone DNA polymerase (1082 aa).

Belongs to the DNA polymerase type-C family. DnaE2 subfamily.

The protein resides in the cytoplasm. It carries out the reaction DNA(n) + a 2'-deoxyribonucleoside 5'-triphosphate = DNA(n+1) + diphosphate. In terms of biological role, DNA polymerase involved in damage-induced mutagenesis and translesion synthesis (TLS). It is not the major replicative DNA polymerase. This chain is Error-prone DNA polymerase, found in Xanthomonas campestris pv. campestris (strain 8004).